Consider the following 246-residue polypeptide: Cell division protein ZapD (246 aa).

This sequence belongs to the ZapD family. As to quaternary structure, interacts with FtsZ.

The protein localises to the cytoplasm. Functionally, cell division factor that enhances FtsZ-ring assembly. Directly interacts with FtsZ and promotes bundling of FtsZ protofilaments, with a reduction in FtsZ GTPase activity. The chain is Cell division protein ZapD from Vibrio parahaemolyticus serotype O3:K6 (strain RIMD 2210633).